The primary structure comprises 152 residues: Adrenodoxin-like protein 2, mitochondrial (152 aa).

The transit peptide at 1-29 directs the protein to the mitochondrion; sequence MLVINSCRAASRLALRSLNLRSPIATRTF. A 2Fe-2S ferredoxin-type domain is found at 41-146; it reads VNITFVRANG…GLEVHVPSTI (106 aa). [2Fe-2S] cluster-binding residues include Cys80, Cys86, Cys89, and Cys127.

The protein belongs to the adrenodoxin/putidaredoxin family. Requires [2Fe-2S] cluster as cofactor.

The protein localises to the mitochondrion. Its function is as follows. Required for ecdysteroidogenesis in the prothoracic gland which is necessary for larval to pupal transition. In Drosophila melanogaster (Fruit fly), this protein is Adrenodoxin-like protein 2, mitochondrial.